The primary structure comprises 378 residues: UDP-N-acetylglucosamine--N-acetylmuramyl-(pentapeptide) pyrophosphoryl-undecaprenol N-acetylglucosamine transferase (378 aa).

Residues 14–16 (TGG), Asn-125, Arg-165, Ser-193, and Gln-293 each bind UDP-N-acetyl-alpha-D-glucosamine.

This sequence belongs to the glycosyltransferase 28 family. MurG subfamily.

The protein localises to the cell inner membrane. The catalysed reaction is di-trans,octa-cis-undecaprenyl diphospho-N-acetyl-alpha-D-muramoyl-L-alanyl-D-glutamyl-meso-2,6-diaminopimeloyl-D-alanyl-D-alanine + UDP-N-acetyl-alpha-D-glucosamine = di-trans,octa-cis-undecaprenyl diphospho-[N-acetyl-alpha-D-glucosaminyl-(1-&gt;4)]-N-acetyl-alpha-D-muramoyl-L-alanyl-D-glutamyl-meso-2,6-diaminopimeloyl-D-alanyl-D-alanine + UDP + H(+). The protein operates within cell wall biogenesis; peptidoglycan biosynthesis. In terms of biological role, cell wall formation. Catalyzes the transfer of a GlcNAc subunit on undecaprenyl-pyrophosphoryl-MurNAc-pentapeptide (lipid intermediate I) to form undecaprenyl-pyrophosphoryl-MurNAc-(pentapeptide)GlcNAc (lipid intermediate II). The chain is UDP-N-acetylglucosamine--N-acetylmuramyl-(pentapeptide) pyrophosphoryl-undecaprenol N-acetylglucosamine transferase from Bartonella tribocorum (strain CIP 105476 / IBS 506).